A 647-amino-acid chain; its full sequence is DNA mismatch repair protein MutL (647 aa).

Residues 387-400 show a composition bias toward basic and acidic residues; it reads SAKPVHEATDEKAE. The disordered stretch occupies residues 387–412; it reads SAKPVHEATDEKAEPQSTSVKFAERK.

The protein belongs to the DNA mismatch repair MutL/HexB family.

Its function is as follows. This protein is involved in the repair of mismatches in DNA. It is required for dam-dependent methyl-directed DNA mismatch repair. May act as a 'molecular matchmaker', a protein that promotes the formation of a stable complex between two or more DNA-binding proteins in an ATP-dependent manner without itself being part of a final effector complex. The sequence is that of DNA mismatch repair protein MutL from Streptococcus sanguinis (strain SK36).